The chain runs to 317 residues: tRNA dimethylallyltransferase (317 aa).

14–21 (GPTASGKS) contacts ATP. 16–21 (TASGKS) is a binding site for substrate. 2 interaction with substrate tRNA regions span residues 39–42 (DSVL) and 163–167 (QRIQR).

Belongs to the IPP transferase family. In terms of assembly, monomer. Mg(2+) serves as cofactor.

It catalyses the reaction adenosine(37) in tRNA + dimethylallyl diphosphate = N(6)-dimethylallyladenosine(37) in tRNA + diphosphate. Catalyzes the transfer of a dimethylallyl group onto the adenine at position 37 in tRNAs that read codons beginning with uridine, leading to the formation of N6-(dimethylallyl)adenosine (i(6)A). The chain is tRNA dimethylallyltransferase from Xylella fastidiosa (strain M12).